We begin with the raw amino-acid sequence, 205 residues long: Cytochrome c oxidase subunit 2 (205 aa).

Positions 115, 150, 152, 154, 158, and 161 each coordinate Cu cation. Residue Glu152 participates in Mg(2+) binding.

It belongs to the cytochrome c oxidase subunit 2 family. As to quaternary structure, component of the cytochrome c oxidase (complex IV, CIV), a multisubunit enzyme composed of a catalytic core of 3 subunits and several supernumerary subunits. The complex exists as a monomer or a dimer and forms supercomplexes (SCs) in the inner mitochondrial membrane with ubiquinol-cytochrome c oxidoreductase (cytochrome b-c1 complex, complex III, CIII). Cu cation serves as cofactor.

Its subcellular location is the mitochondrion inner membrane. The catalysed reaction is 4 Fe(II)-[cytochrome c] + O2 + 8 H(+)(in) = 4 Fe(III)-[cytochrome c] + 2 H2O + 4 H(+)(out). Its function is as follows. Component of the cytochrome c oxidase, the last enzyme in the mitochondrial electron transport chain which drives oxidative phosphorylation. The respiratory chain contains 3 multisubunit complexes succinate dehydrogenase (complex II, CII), ubiquinol-cytochrome c oxidoreductase (cytochrome b-c1 complex, complex III, CIII) and cytochrome c oxidase (complex IV, CIV), that cooperate to transfer electrons derived from NADH and succinate to molecular oxygen, creating an electrochemical gradient over the inner membrane that drives transmembrane transport and the ATP synthase. Cytochrome c oxidase is the component of the respiratory chain that catalyzes the reduction of oxygen to water. Electrons originating from reduced cytochrome c in the intermembrane space (IMS) are transferred via the dinuclear copper A center (CU(A)) of subunit 2 and heme A of subunit 1 to the active site in subunit 1, a binuclear center (BNC) formed by heme A3 and copper B (CU(B)). The BNC reduces molecular oxygen to 2 water molecules using 4 electrons from cytochrome c in the IMS and 4 protons from the mitochondrial matrix. In Paramecium tetraurelia, this protein is Cytochrome c oxidase subunit 2 (COII).